The sequence spans 251 residues: Ditrans,polycis-undecaprenyl-diphosphate synthase ((2E,6E)-farnesyl-diphosphate specific) (251 aa).

Residue aspartate 21 is part of the active site. Position 21 (aspartate 21) interacts with Mg(2+). Substrate contacts are provided by residues 22–25 (GNNR), tryptophan 26, histidine 38, and 66–68 (SSE). The active-site Proton acceptor is the asparagine 69. Substrate is bound by residues tryptophan 70, arginine 72, arginine 189, and 195–197 (RIS). A Mg(2+)-binding site is contributed by glutamate 208.

This sequence belongs to the UPP synthase family. Homodimer. Mg(2+) serves as cofactor.

It catalyses the reaction 8 isopentenyl diphosphate + (2E,6E)-farnesyl diphosphate = di-trans,octa-cis-undecaprenyl diphosphate + 8 diphosphate. Its function is as follows. Catalyzes the sequential condensation of isopentenyl diphosphate (IPP) with (2E,6E)-farnesyl diphosphate (E,E-FPP) to yield (2Z,6Z,10Z,14Z,18Z,22Z,26Z,30Z,34E,38E)-undecaprenyl diphosphate (di-trans,octa-cis-UPP). UPP is the precursor of glycosyl carrier lipid in the biosynthesis of bacterial cell wall polysaccharide components such as peptidoglycan and lipopolysaccharide. The polypeptide is Ditrans,polycis-undecaprenyl-diphosphate synthase ((2E,6E)-farnesyl-diphosphate specific) (Pseudomonas syringae pv. tomato (strain ATCC BAA-871 / DC3000)).